Here is a 337-residue protein sequence, read N- to C-terminus: DNA-directed RNA polymerase subunit alpha (337 aa).

Positions 1-233 are alpha N-terminal domain (alpha-NTD); that stretch reads MVREEVAVST…DLFIPFLHAE (233 aa). Residues 266–337 form an alpha C-terminal domain (alpha-CTD) region; that stretch reads GIALKCIFID…FTIDLPKNKF (72 aa).

This sequence belongs to the RNA polymerase alpha chain family. In terms of assembly, in plastids the minimal PEP RNA polymerase catalytic core is composed of four subunits: alpha, beta, beta', and beta''. When a (nuclear-encoded) sigma factor is associated with the core the holoenzyme is formed, which can initiate transcription.

The protein resides in the plastid. It localises to the chloroplast. It catalyses the reaction RNA(n) + a ribonucleoside 5'-triphosphate = RNA(n+1) + diphosphate. Its function is as follows. DNA-dependent RNA polymerase catalyzes the transcription of DNA into RNA using the four ribonucleoside triphosphates as substrates. The chain is DNA-directed RNA polymerase subunit alpha from Liriodendron tulipifera (Tuliptree).